The chain runs to 546 residues: Cyclic GMP-AMP synthase-like receptor (546 aa).

Residues 1–10 (MPVGSRQNRV) are compositionally biased toward polar residues. Disordered regions lie at residues 1 to 116 (MPVG…CASR) and 134 to 186 (AKQE…RLTN). Positions 35–45 (YTERKERKDVQ) are enriched in basic and acidic residues. Low complexity predominate over residues 69-80 (TSRTLRQTSQSR). 2 stretches are compositionally biased toward basic and acidic residues: residues 82-95 (EVLE…DCKK) and 145-174 (KEGY…DKAT). The segment covering 175–186 (SHSTKGSFRLTN) has biased composition (polar residues). ATP contacts are provided by residues serine 243 and 255 to 257 (EFD). Residues glutamate 255, aspartate 257, and aspartate 374 each coordinate Mg(2+). GTP contacts are provided by residues aspartate 374 and 428–435 (RTSFSLAE). Residues 432–435 (SLAE), lysine 455, and 470–474 (SYHLK) each bind ATP.

It belongs to the mab-21 family. Requires Mg(2+) as cofactor. It depends on Mn(2+) as a cofactor.

The catalysed reaction is GTP + ATP = 2',3'-cGAMP + 2 diphosphate. It carries out the reaction GTP + ATP = pppGp(2'-5')A + diphosphate. The enzyme catalyses pppGp(2'-5')A = 2',3'-cGAMP + diphosphate. Functionally, nucleotidyltransferase that catalyzes the formation of cyclic GMP-AMP (2',3'-cGAMP) from ATP and GTP and plays a key role in innate immunity. Directly binds some unknown ligand, activating the nucleotidyltransferase activity, leading to synthesis of 2',3'-cGAMP, a second messenger that binds to and activates Sting, thereby triggering the immune response via activation of the NF-kappa-B transcription factor. The protein is Cyclic GMP-AMP synthase-like receptor of Exaiptasia diaphana (Tropical sea anemone).